The sequence spans 258 residues: Tryptophan synthase alpha chain (258 aa).

Active-site proton acceptor residues include Glu-47 and Asp-58.

It belongs to the TrpA family. As to quaternary structure, tetramer of two alpha and two beta chains.

It carries out the reaction (1S,2R)-1-C-(indol-3-yl)glycerol 3-phosphate + L-serine = D-glyceraldehyde 3-phosphate + L-tryptophan + H2O. It functions in the pathway amino-acid biosynthesis; L-tryptophan biosynthesis; L-tryptophan from chorismate: step 5/5. Its function is as follows. The alpha subunit is responsible for the aldol cleavage of indoleglycerol phosphate to indole and glyceraldehyde 3-phosphate. This Bacillus cereus (strain ATCC 14579 / DSM 31 / CCUG 7414 / JCM 2152 / NBRC 15305 / NCIMB 9373 / NCTC 2599 / NRRL B-3711) protein is Tryptophan synthase alpha chain.